Here is a 344-residue protein sequence, read N- to C-terminus: Centromere protein L (344 aa).

Residues 1–32 (MAGGRPAGSAIEMEGAMRTLPSSGRPSGTGWQ) are disordered. Over residues 20 to 32 (LPSSGRPSGTGWQ) the composition is skewed to polar residues.

This sequence belongs to the CENP-L/IML3 family. In terms of assembly, component of the CENPA-HI complex, at least composed of CENPH, CENPI, CENPK, CENPL, CENPM, CENPO and CENPP.

It localises to the nucleus. The protein localises to the chromosome. Its subcellular location is the centromere. Component of the CENPA-HI complex, a centromeric complex involved in assembly of kinetochore proteins, mitotic progression and chromosome segregation. The sequence is that of Centromere protein L (CENPL) from Gallus gallus (Chicken).